The chain runs to 236 residues: F-box and leucine-rich protein 22 (236 aa).

The 46-residue stretch at 1–46 (MHITQLNRECLLCLFSFLDKDSRRSLSRTCSQLRDVFEDPTLWPLL) folds into the F-box domain. 6 LRR repeats span residues 15 to 40 (FSFL…FEDP), 43 to 72 (WPLL…SICW), 98 to 123 (HESL…TLSG), 124 to 149 (CGHV…RLEN), 150 to 175 (CARV…HVDF), and 176 to 201 (CRNV…AERS).

Directly interacts with SKP1 and CUL1. In terms of tissue distribution, enriched in cardiac muscle (at protein level).

It localises to the cytoplasm. The protein localises to the myofibril. Its subcellular location is the sarcomere. The protein resides in the z line. It participates in protein modification; protein ubiquitination. In terms of biological role, substrate-recognition component of the SCF (SKP1-CUL1-F-box protein)-type E3 ubiquitin ligase complex. Promotes ubiquitination of sarcomeric proteins alpha-actinin-2 (ACTN2) and filamin-C (FLNC). The polypeptide is F-box and leucine-rich protein 22 (Fbxl22) (Mus musculus (Mouse)).